The sequence spans 227 residues: Cytochrome c oxidase subunit 2 (227 aa).

Residues 1–14 (MAYPFQLGLQDATS) are Mitochondrial intermembrane-facing. Residues 15-45 (PIMEELMNFHDHTLMIVFLISSLVLYIISLM) traverse the membrane as a helical segment. Residues 46-59 (LTTKLTHTSTMDAQ) lie on the Mitochondrial matrix side of the membrane. The chain crosses the membrane as a helical span at residues 60–87 (EVETIWTILPAAILILIALPSLRILYMM). At 88-227 (DEINNPVLTV…YFENWSASMI (140 aa)) the chain is on the mitochondrial intermembrane side. Cu cation contacts are provided by His161, Cys196, Glu198, Cys200, His204, and Met207. Residue Glu198 coordinates Mg(2+). The residue at position 218 (Tyr218) is a Phosphotyrosine.

The protein belongs to the cytochrome c oxidase subunit 2 family. In terms of assembly, component of the cytochrome c oxidase (complex IV, CIV), a multisubunit enzyme composed of 14 subunits. The complex is composed of a catalytic core of 3 subunits MT-CO1, MT-CO2 and MT-CO3, encoded in the mitochondrial DNA, and 11 supernumerary subunits COX4I, COX5A, COX5B, COX6A, COX6B, COX6C, COX7A, COX7B, COX7C, COX8 and NDUFA4, which are encoded in the nuclear genome. The complex exists as a monomer or a dimer and forms supercomplexes (SCs) in the inner mitochondrial membrane with NADH-ubiquinone oxidoreductase (complex I, CI) and ubiquinol-cytochrome c oxidoreductase (cytochrome b-c1 complex, complex III, CIII), resulting in different assemblies (supercomplex SCI(1)III(2)IV(1) and megacomplex MCI(2)III(2)IV(2)). Found in a complex with TMEM177, COA6, COX18, COX20, SCO1 and SCO2. Interacts with TMEM177 in a COX20-dependent manner. Interacts with COX20. Interacts with COX16. The cofactor is Cu cation.

It localises to the mitochondrion inner membrane. The enzyme catalyses 4 Fe(II)-[cytochrome c] + O2 + 8 H(+)(in) = 4 Fe(III)-[cytochrome c] + 2 H2O + 4 H(+)(out). Its function is as follows. Component of the cytochrome c oxidase, the last enzyme in the mitochondrial electron transport chain which drives oxidative phosphorylation. The respiratory chain contains 3 multisubunit complexes succinate dehydrogenase (complex II, CII), ubiquinol-cytochrome c oxidoreductase (cytochrome b-c1 complex, complex III, CIII) and cytochrome c oxidase (complex IV, CIV), that cooperate to transfer electrons derived from NADH and succinate to molecular oxygen, creating an electrochemical gradient over the inner membrane that drives transmembrane transport and the ATP synthase. Cytochrome c oxidase is the component of the respiratory chain that catalyzes the reduction of oxygen to water. Electrons originating from reduced cytochrome c in the intermembrane space (IMS) are transferred via the dinuclear copper A center (CU(A)) of subunit 2 and heme A of subunit 1 to the active site in subunit 1, a binuclear center (BNC) formed by heme A3 and copper B (CU(B)). The BNC reduces molecular oxygen to 2 water molecules using 4 electrons from cytochrome c in the IMS and 4 protons from the mitochondrial matrix. This Praomys tullbergi (Tullberg's soft-furred rat) protein is Cytochrome c oxidase subunit 2 (MT-CO2).